Consider the following 677-residue polypeptide: Mitochondrial disaggregase (677 aa).

The transit peptide at 1–28 (MLGSLVSKRTAPAPRLLLQLLRSPSLRS) directs the protein to the mitochondrion. The tract at residues 92-126 (PSPEDTLPGQDSWNGVLSRAGLGVWALATALVVHC) is autoinhibitory. 4 ANK repeats span residues 133–162 (SKDA…DVNA), 166–195 (LGWT…DPNL), 235–265 (KGCT…PLQR), and 268–297 (MGHT…EKQR). Residues histidine 316, isoleucine 318, serine 353, glycine 354, isoleucine 355, glycine 356, lysine 357, threonine 358, glutamate 425, and asparagine 466 each contribute to the ATP site. The regulatory; slows ATPase and disaggregase activities stretch occupies residues 477 to 505 (LQLRQEALEMSRNRIAENLGDVQISDKIT). Residue arginine 531 coordinates ATP. N6-acetyllysine is present on lysine 559. Residue arginine 590 participates in ATP binding.

This sequence belongs to the ClpA/ClpB family. In terms of assembly, homododecamer when substrate-bound; the homododecamer consists of 2 homohexamers stacked head-to-head via ANK repeat-mediated interactions. The active substrate-bound form is likely to exist in a dynamic equilibrium between homohexamers and homododecamers. Homotetradecamer in the unbound state which is remodeled upon substrate binding into the homododecamer. Interacts with PHB and PHB2. Interacts with MAVS; the interaction is enhanced by Sendai virus infection. Proteolytically cleaved by protease PARL. ATP-dependent protein disaggregase activity is stimulated by PARL-mediated cleavage of the N-terminal autoinhibitory peptide.

It is found in the mitochondrion intermembrane space. The enzyme catalyses ATP + H2O = ADP + phosphate + H(+). Disaggregase activity is inhibited by ADP. Its function is as follows. Functions as a regulatory ATPase and participates in secretion/protein trafficking process. Has ATP-dependent protein disaggregase activity and is required to maintain the solubility of key mitochondrial proteins. Involved in mitochondrial-mediated antiviral innate immunity, activates RIG-I-mediated signal transduction and production of IFNB1 and pro-inflammatory cytokine IL6. Plays a role in granulocyte differentiation. The polypeptide is Mitochondrial disaggregase (Bos taurus (Bovine)).